A 149-amino-acid polypeptide reads, in one-letter code: D-aminoacyl-tRNA deacylase (149 aa).

A Gly-cisPro motif, important for rejection of L-amino acids motif is present at residues 137–138 (GP).

This sequence belongs to the DTD family. In terms of assembly, homodimer.

The protein resides in the cytoplasm. It carries out the reaction glycyl-tRNA(Ala) + H2O = tRNA(Ala) + glycine + H(+). It catalyses the reaction a D-aminoacyl-tRNA + H2O = a tRNA + a D-alpha-amino acid + H(+). Functionally, an aminoacyl-tRNA editing enzyme that deacylates mischarged D-aminoacyl-tRNAs. Also deacylates mischarged glycyl-tRNA(Ala), protecting cells against glycine mischarging by AlaRS. Acts via tRNA-based rather than protein-based catalysis; rejects L-amino acids rather than detecting D-amino acids in the active site. By recycling D-aminoacyl-tRNA to D-amino acids and free tRNA molecules, this enzyme counteracts the toxicity associated with the formation of D-aminoacyl-tRNA entities in vivo and helps enforce protein L-homochirality. The chain is D-aminoacyl-tRNA deacylase from Koribacter versatilis (strain Ellin345).